A 448-amino-acid polypeptide reads, in one-letter code: Protein odr-4 homolog (448 aa).

2 consecutive transmembrane segments (helical) span residues alanine 76–threonine 96 and glycine 428–isoleucine 448.

It belongs to the ODR-4 family.

It localises to the membrane. Its function is as follows. May play a role in the trafficking of a subset of G-protein coupled receptors. The sequence is that of Protein odr-4 homolog (odr4) from Xenopus tropicalis (Western clawed frog).